Consider the following 485-residue polypeptide: Glutamyl-tRNA(Gln) amidotransferase subunit A (485 aa).

Active-site charge relay system residues include K76 and S151. S175 serves as the catalytic Acyl-ester intermediate.

The protein belongs to the amidase family. GatA subfamily. As to quaternary structure, heterotrimer of A, B and C subunits.

It catalyses the reaction L-glutamyl-tRNA(Gln) + L-glutamine + ATP + H2O = L-glutaminyl-tRNA(Gln) + L-glutamate + ADP + phosphate + H(+). In terms of biological role, allows the formation of correctly charged Gln-tRNA(Gln) through the transamidation of misacylated Glu-tRNA(Gln) in organisms which lack glutaminyl-tRNA synthetase. The reaction takes place in the presence of glutamine and ATP through an activated gamma-phospho-Glu-tRNA(Gln). The sequence is that of Glutamyl-tRNA(Gln) amidotransferase subunit A from Methylococcus capsulatus (strain ATCC 33009 / NCIMB 11132 / Bath).